The following is a 203-amino-acid chain: Putative GPI-anchored protein YHR214W (203 aa).

An N-terminal signal peptide occupies residues Met1–Gly23. N-linked (GlcNAc...) asparagine glycosylation is found at Asn28 and Asn138. Asn184 carries GPI-anchor amidated asparagine lipidation. Positions Ala185–Leu203 are cleaved as a propeptide — removed in mature form.

The protein localises to the cell membrane. In Saccharomyces cerevisiae (strain ATCC 204508 / S288c) (Baker's yeast), this protein is Putative GPI-anchored protein YHR214W.